The primary structure comprises 147 residues: UPF0310 protein in gntR 5'region (147 aa).

This sequence belongs to the UPF0310 family.

The protein is UPF0310 protein in gntR 5'region (oug) of Bacillus licheniformis.